The following is a 30-amino-acid chain: Dendrotoxin A (30 aa).

A disulfide bond links C3 and C22.

It belongs to the three-finger toxin family. Short-chain subfamily. Acn-esterase inhibitor sub-subfamily. In terms of processing, contains 4 disulfide bonds. In terms of tissue distribution, expressed by the venom gland.

It localises to the secreted. Functionally, inhibits acetylcholinesterase. Has been described to inhibit both the slowly and the rapidly inactivating phases of potassium efflux. In Dendroaspis angusticeps (Eastern green mamba), this protein is Dendrotoxin A.